The following is a 245-amino-acid chain: rRNA adenine N-6-methyltransferase (245 aa).

S-adenosyl-L-methionine contacts are provided by Asn10, Leu12, Gly37, Glu58, Asp83, and Asn100.

It belongs to the class I-like SAM-binding methyltransferase superfamily. rRNA adenine N(6)-methyltransferase family.

It catalyses the reaction adenosine(2085) in 23S rRNA + 2 S-adenosyl-L-methionine = N(6)-dimethyladenosine(2085) in 23S rRNA + 2 S-adenosyl-L-homocysteine + 2 H(+). In terms of biological role, this protein produces a dimethylation of the adenine residue at position 2085 in 23S rRNA, resulting in reduced affinity between ribosomes and macrolide-lincosamide-streptogramin B antibiotics. This chain is rRNA adenine N-6-methyltransferase (ermBC), found in Escherichia coli.